A 100-amino-acid polypeptide reads, in one-letter code: Replication restart protein PriB (100 aa).

In terms of domain architecture, SSB spans 1–100 (MTNRMELSGT…VLHADDIIHI (100 aa)).

This sequence belongs to the PriB family. As to quaternary structure, homodimer. Interacts with PriA and DnaT. Component of the replication restart primosome. Primosome assembly occurs via a 'hand-off' mechanism. PriA binds to replication forks, subsequently PriB then DnaT bind; DnaT then displaces ssDNA to generate the helicase loading substrate.

In terms of biological role, involved in the restart of stalled replication forks, which reloads the replicative helicase on sites other than the origin of replication; the PriA-PriB pathway is the major replication restart pathway. During primosome assembly it facilitates complex formation between PriA and DnaT on DNA; stabilizes PriA on DNA. Stimulates the DNA unwinding activity of PriA helicase. The protein is Replication restart protein PriB of Vibrio vulnificus (strain CMCP6).